The chain runs to 3707 residues: CUB and sushi domain-containing protein 3 (3707 aa).

Residues 1-21 (MKGSRKGESRAKESKPREPGT) are compositionally biased toward basic and acidic residues. Residues 1–22 (MKGSRKGESRAKESKPREPGTR) are disordered. Topologically, residues 1-42 (MKGSRKGESRAKESKPREPGTRRCAKCGRLDFILKKKMGIKS) are cytoplasmic. Residues 43 to 63 (GFTFWNLVFLLTLSCVKGFIY) traverse the membrane as a helical segment. Residues 64-3630 (TCGGTLKGLN…NQPHGTNSSS (3567 aa)) are Extracellular-facing. 4 disulfide bridges follow: cysteine 65–cysteine 91, cysteine 178–cysteine 218, cysteine 204–cysteine 235, and cysteine 241–cysteine 267. In terms of domain architecture, CUB 1 spans 65–173 (CGGTLKGLNG…HGFKVYYEEL (109 aa)). Asparagine 73 and asparagine 90 each carry an N-linked (GlcNAc...) asparagine glycan. The Sushi 1 domain maps to 176-237 (SSCGNPGVPP…WDFPVPICRA (62 aa)). The 105-residue stretch at 241-345 (CGGTMRGSSG…RGFSAPYQGS (105 aa)) folds into the CUB 2 domain. Positions 388–437 (HRLSEEQRVQVRSLSDSGLDPNTPEDQLSPHQADTQSTSRRPRNAEQIER) are disordered. A compositionally biased stretch (polar residues) spans 411 to 426 (PEDQLSPHQADTQSTS). A Sushi 2 domain is found at 484–545 (NLCPDPGEPE…WSDHRPVCKV (62 aa)). Intrachain disulfides connect cysteine 486/cysteine 526, cysteine 512/cysteine 543, cysteine 548/cysteine 574, cysteine 664/cysteine 704, cysteine 690/cysteine 717, and cysteine 721/cysteine 747. A CUB 3 domain is found at 548-659 (CGSNLQGPSG…VGFKVNYKEI (112 aa)). Residues 662-719 (ESCGDPGTPLYGIREGDGFSNRDVLRFECQFGFELIGEKSIVCQENNQWSANIPICIF) enclose the Sushi 3 domain. One can recognise a CUB 4 domain in the interval 721-829 (CLSNFTAPMG…RGFNITYNTF (109 aa)). Residues asparagine 724 and asparagine 823 are each glycosylated (N-linked (GlcNAc...) asparagine). The 62-residue stretch at 832–893 (NECPDPGIPI…WSGPIPRCGA (62 aa)) folds into the Sushi 4 domain. Intrachain disulfides connect cysteine 834–cysteine 875, cysteine 860–cysteine 891, and cysteine 895–cysteine 921. The CUB 5 domain occupies 895–1003 (CGGHFSAPSG…NGFKIHYESV (109 aa)). Asparagine 966 carries N-linked (GlcNAc...) asparagine glycosylation. In terms of domain architecture, Sushi 5 spans 1008-1065 (YSCLDPGIPVHGRRYGHDFSIGSTVSFSCDPGYRLSHEEPLLCEKNHWWSHPLPTCDA). 3 disulfide bridges follow: cysteine 1010–cysteine 1050, cysteine 1036–cysteine 1063, and cysteine 1067–cysteine 1093. Residues 1067-1177 (CGGDVRGPSG…EGFNITFSEY (111 aa)) form the CUB 6 domain. Residues asparagine 1092, asparagine 1126, and asparagine 1171 are each glycosylated (N-linked (GlcNAc...) asparagine). The Sushi 6 domain maps to 1180–1239 (EPCEDPGIPQYGSRVGFSFGVGDTLTFSCSLGYRLEGSSEIICLGGGRRVWSAPLPRCVA). 3 disulfides stabilise this stretch: cysteine 1182–cysteine 1222, cysteine 1208–cysteine 1237, and cysteine 1241–cysteine 1267. The 109-residue stretch at 1241-1349 (CGASATNNEG…EGFQLVYTSF (109 aa)) folds into the CUB 7 domain. An N-linked (GlcNAc...) asparagine glycan is attached at asparagine 1280. One can recognise a Sushi 7 domain in the interval 1352–1412 (SHCEDPGIPQ…WDYPLPSCIA (61 aa)). Intrachain disulfides connect cysteine 1354-cysteine 1395, cysteine 1381-cysteine 1410, cysteine 1414-cysteine 1441, cysteine 1528-cysteine 1568, cysteine 1554-cysteine 1584, cysteine 1588-cysteine 1614, cysteine 1701-cysteine 1741, cysteine 1727-cysteine 1758, cysteine 1762-cysteine 1788, cysteine 1878-cysteine 1918, cysteine 1904-cysteine 1935, and cysteine 1939-cysteine 1965. The CUB 8 domain occupies 1414 to 1523 (CGGRFKGESS…SGFAIQFSSS (110 aa)). The 61-residue stretch at 1526–1586 (TACRDPGVPM…WQPSPPVCIA (61 aa)) folds into the Sushi 8 domain. Asparagine 1536 carries an N-linked (GlcNAc...) asparagine glycan. The CUB 9 domain occupies 1588-1696 (CGGNLTGSSG…TGFHLEYKAK (109 aa)). 2 N-linked (GlcNAc...) asparagine glycosylation sites follow: asparagine 1591 and asparagine 1709. In terms of domain architecture, Sushi 9 spans 1699-1760 (ESCFDPGNIM…WNRVLPSCHA (62 aa)). One can recognise a CUB 10 domain in the interval 1762 to 1870 (CGSRSTGSEG…KGFHFVYQAV (109 aa)). Asparagine 1781 carries N-linked (GlcNAc...) asparagine glycosylation. The region spanning 1876-1937 (TQCSSVPEPR…WNDSLPTCIV (62 aa)) is the Sushi 10 domain. Asparagine 1929 is a glycosylation site (N-linked (GlcNAc...) asparagine). One can recognise a CUB 11 domain in the interval 1939 to 2047 (CGGILTKRKG…AGFHLEYTAI (109 aa)). An N-linked (GlcNAc...) asparagine glycan is attached at asparagine 2019. The Sushi 11 domain maps to 2050 to 2109 (DSCPEPQTPSSGIKVGDRYMVGDVVSFQCDQGYSLQGHSHITCMPGPVRRWNYPIPICLA). 3 cysteine pairs are disulfide-bonded: cysteine 2052–cysteine 2092, cysteine 2078–cysteine 2107, and cysteine 2111–cysteine 2137. A CUB 12 domain is found at 2111-2219 (CGGAMSDFSG…QGFHIVYQAY (109 aa)). Asparagine 2155 is a glycosylation site (N-linked (GlcNAc...) asparagine). Positions 2222–2281 (QSCPDPRPFRNGFVIGNDFTVGQTISFECFPGYTLIGNSALTCLHGVSRNWNHPLPRCEA) constitute a Sushi 12 domain. Disulfide bonds link cysteine 2224-cysteine 2264, cysteine 2250-cysteine 2279, cysteine 2283-cysteine 2309, cysteine 2395-cysteine 2437, cysteine 2423-cysteine 2452, cysteine 2456-cysteine 2484, cysteine 2569-cysteine 2610, cysteine 2596-cysteine 2627, cysteine 2632-cysteine 2674, cysteine 2658-cysteine 2689, cysteine 2694-cysteine 2739, cysteine 2725-cysteine 2754, cysteine 2759-cysteine 2799, cysteine 2785-cysteine 2812, cysteine 2817-cysteine 2857, cysteine 2843-cysteine 2870, cysteine 2875-cysteine 2915, cysteine 2901-cysteine 2928, cysteine 2933-cysteine 2977, cysteine 2963-cysteine 2990, cysteine 2995-cysteine 3035, cysteine 3021-cysteine 3048, cysteine 3056-cysteine 3096, cysteine 3082-cysteine 3109, cysteine 3114-cysteine 3155, cysteine 3141-cysteine 3168, cysteine 3173-cysteine 3215, cysteine 3199-cysteine 3228, cysteine 3233-cysteine 3273, cysteine 3259-cysteine 3286, cysteine 3291-cysteine 3331, cysteine 3317-cysteine 3344, cysteine 3352-cysteine 3393, cysteine 3379-cysteine 3406, cysteine 3411-cysteine 3453, and cysteine 3438-cysteine 3466. Residues 2283–2394 (CGGNITAMNG…LSYHAYQLRV (112 aa)) enclose the CUB 13 domain. N-linked (GlcNAc...) asparagine glycosylation is found at asparagine 2286 and asparagine 2291. Positions 2393-2454 (RVCQPPPPVP…MDGAPPVCQV (62 aa)) constitute a Sushi 13 domain. Residues 2456-2567 (CPANELRLDS…KGFRIRYIAF (112 aa)) form the CUB 14 domain. Sushi domains lie at 2567–2629 (FYCS…ACQA), 2630–2691 (ISCG…RCVV), 2692–2756 (VTCP…YCQI), 2757–2814 (ISCG…RCLA), 2815–2872 (GHCG…SCVP), 2873–2930 (VSCG…VCKV), 2931–2992 (VNCS…ECIM), 2993–3050 (IDCG…HCSG), 3054–3111 (GTCG…ECKA), 3112–3170 (VQCG…NCTI), 3171–3230 (ISCG…TCRA), 3231–3288 (VTCS…QCLP), 3289–3346 (KFCG…HCIE), 3350–3408 (TSCE…ECIP), and 3409–3468 (HSCK…VCEA). Low complexity predominate over residues 3052–3065 (TTGTCGDPGTPGHG). The tract at residues 3052–3071 (TTGTCGDPGTPGHGSRQESD) is disordered. The helical transmembrane segment at 3631-3651 (VAIAILVPFFALIFAGFGFYL) threads the bilayer. Residues 3652 to 3707 (YKQRTAPKTQYTGCSVHENNNGQAAFENPMYDTNAKSVEGKAVRFDPNLNTVCTMV) lie on the Cytoplasmic side of the membrane.

This sequence belongs to the CSMD family. In terms of tissue distribution, expressed in the apical dendrites of postnatal hippocampal neurons (at protein level).

The protein resides in the cell membrane. Its function is as follows. Involved in dendrite development. The polypeptide is CUB and sushi domain-containing protein 3 (Csmd3) (Mus musculus (Mouse)).